The sequence spans 324 residues: Olfactory receptor 1L3 (324 aa).

The Extracellular portion of the chain corresponds to 1 to 25 (MGMSNLTRLSEFILLGLSSRSEDQR). An N-linked (GlcNAc...) asparagine glycan is attached at Asn-5. A helical membrane pass occupies residues 26 to 49 (PLFALFLIIYLVTLMGNLLIILAI). Residues 50-57 (HSDPRLQN) lie on the Cytoplasmic side of the membrane. The helical transmembrane segment at 58-79 (PMYFFLSILSFADICYTTVIVP) threads the bilayer. The Extracellular portion of the chain corresponds to 80 to 100 (KMLVNFLSEKKTISYAECLAQ). A disulfide bridge connects residues Cys-97 and Cys-189. Residues 101–120 (MYFFLVFGNIDSYLLAAMAI) form a helical membrane-spanning segment. Over 121–139 (NRCVAICNPFHYVTVMNRR) the chain is Cytoplasmic. The helical transmembrane segment at 140–158 (CCVLLLAFPITFSYFHSLL) threads the bilayer. Residues 159–196 (HVLLVNRLTFCTSNVIHHFFCDVNPVLKLSCSSTFVNE) lie on the Extracellular side of the membrane. A helical membrane pass occupies residues 197 to 219 (IVAMTEGLASVMAPFVCIIISYL). Residues 220-236 (RILIAVLKIPSAAGKHK) are Cytoplasmic-facing. Residues 237–259 (AFSTCSSHLTVVILFYGSISYVY) form a helical membrane-spanning segment. The Extracellular segment spans residues 260–271 (LQPLSSYTVKDR). A helical transmembrane segment spans residues 272-291 (IATINYTVLTSVLNPFIYSL). The Cytoplasmic portion of the chain corresponds to 292 to 324 (RNKDMKRGLQKLINKIKSQMSRFSTKTNKICGP).

It belongs to the G-protein coupled receptor 1 family.

The protein resides in the cell membrane. Odorant receptor. The chain is Olfactory receptor 1L3 (OR1L3) from Homo sapiens (Human).